The sequence spans 393 residues: uncharacterized protein (393 aa).

[4Fe-4S] cluster is bound by residues C9, C15, C18, and C97. The S-adenosyl-L-methionine site is built by Q231, Y258, E279, and D325. The active-site Nucleophile is C352.

Belongs to the class I-like SAM-binding methyltransferase superfamily. RNA M5U methyltransferase family.

This is an uncharacterized protein from Leptospira interrogans serogroup Icterohaemorrhagiae serovar Lai (strain 56601).